We begin with the raw amino-acid sequence, 384 residues long: MKMEPDEVSSLRKHRFVGTDNSILGRYVLHHYTNWMLEKIPAFVAPNMLTLCGLIAMVASLALTLAFDPCLCSPPAFLSLANFLLMFVYFTCDNLDGAQARKTGSGSSLGQLFDHGVDSCCALITSIALSSTFGFGLSPKFLIFTLAVMVQFYLAGIEEKFTGRFVLGRISGASEGVVFAMGAHLATFLCGKRLFRHLFSDNFLWPVKKIYSSILGTDNFSAVSVIIGTALVFNTASTLISIEFKMHFPRRLLLYSTILRVMSFVTSFVILHNTLSTESLWIRHLNILMFGQIFSIKYVNEVCSYIIRRDPFLFTPPYLMYLTVSAVLQLQYLKEFRETLVAISFLLSSMYYLLVALRIIITFKEALGISFLSITTSDKSKAGG.

The protein belongs to the CDP-alcohol phosphatidyltransferase class-I family.

Its subcellular location is the membrane. It catalyses the reaction a CDP-1,2-diacyl-sn-glycerol + L-serine = a 1,2-diacyl-sn-glycero-3-phospho-L-serine + CMP + H(+). It participates in phospholipid metabolism; phosphatidylethanolamine biosynthesis; phosphatidylethanolamine from CDP-diacylglycerol: step 1/2. The sequence is that of CDP-diacylglycerol--serine O-phosphatidyltransferase (PSS) from Encephalitozoon cuniculi (strain GB-M1) (Microsporidian parasite).